A 288-amino-acid polypeptide reads, in one-letter code: Bis(5'-nucleosyl)-tetraphosphatase, symmetrical (288 aa).

The protein belongs to the Ap4A hydrolase family.

The catalysed reaction is P(1),P(4)-bis(5'-adenosyl) tetraphosphate + H2O = 2 ADP + 2 H(+). In terms of biological role, hydrolyzes diadenosine 5',5'''-P1,P4-tetraphosphate to yield ADP. The protein is Bis(5'-nucleosyl)-tetraphosphatase, symmetrical of Pseudomonas putida (strain GB-1).